Reading from the N-terminus, the 524-residue chain is Nuclear distribution protein PAC1 (524 aa).

Residues Ser-65–Gly-90 adopt a coiled-coil conformation. WD repeat units lie at residues Gln-121–Pro-160, Ala-166–Thr-217, Gly-220–Thr-262, Asn-277–Leu-317, Ile-353–His-394, Gly-415–Ser-454, Gly-463–Glu-492, and Glu-493–Ser-524.

This sequence belongs to the WD repeat LIS1/nudF family. In terms of assembly, self-associates. Interacts with NDL1 and dynein.

The protein localises to the cytoplasm. Its subcellular location is the cytoskeleton. It is found in the spindle pole. Its function is as follows. Positively regulates the activity of the minus-end directed microtubule motor protein dynein. Plays a central role in positioning the mitotic spindle at the bud neck during cell division. Targets cytoplasmic dynein to microtubule plus ends, thereby promoting dynein-mediated microtubule sliding along the bud cortex and consequently the movement of the mitotic spindle to the bud neck. This Scheffersomyces stipitis (strain ATCC 58785 / CBS 6054 / NBRC 10063 / NRRL Y-11545) (Yeast) protein is Nuclear distribution protein PAC1.